The primary structure comprises 425 residues: UDP-N-acetylglucosamine 1-carboxyvinyltransferase (425 aa).

22–23 (KN) lines the phosphoenolpyruvate pocket. Arginine 93 contacts UDP-N-acetyl-alpha-D-glucosamine. The Proton donor role is filled by cysteine 117. Cysteine 117 is modified (2-(S-cysteinyl)pyruvic acid O-phosphothioketal). Residues 122–126 (RPVDL), 162–165 (KVSV), aspartate 307, and isoleucine 329 contribute to the UDP-N-acetyl-alpha-D-glucosamine site.

It belongs to the EPSP synthase family. MurA subfamily.

It localises to the cytoplasm. It carries out the reaction phosphoenolpyruvate + UDP-N-acetyl-alpha-D-glucosamine = UDP-N-acetyl-3-O-(1-carboxyvinyl)-alpha-D-glucosamine + phosphate. Its pathway is cell wall biogenesis; peptidoglycan biosynthesis. In terms of biological role, cell wall formation. Adds enolpyruvyl to UDP-N-acetylglucosamine. The protein is UDP-N-acetylglucosamine 1-carboxyvinyltransferase of Pasteurella multocida (strain Pm70).